The primary structure comprises 162 residues: Shikimate kinase (162 aa).

An ATP-binding site is contributed by 11–16 (GSGKSS). Serine 15 serves as a coordination point for Mg(2+). 3 residues coordinate substrate: aspartate 33, arginine 57, and glycine 80. Arginine 116 provides a ligand contact to ATP. Residue arginine 132 coordinates substrate.

Belongs to the shikimate kinase family. In terms of assembly, monomer. It depends on Mg(2+) as a cofactor.

The protein resides in the cytoplasm. The catalysed reaction is shikimate + ATP = 3-phosphoshikimate + ADP + H(+). It participates in metabolic intermediate biosynthesis; chorismate biosynthesis; chorismate from D-erythrose 4-phosphate and phosphoenolpyruvate: step 5/7. Its function is as follows. Catalyzes the specific phosphorylation of the 3-hydroxyl group of shikimic acid using ATP as a cosubstrate. The protein is Shikimate kinase of Helicobacter pylori (strain J99 / ATCC 700824) (Campylobacter pylori J99).